A 340-amino-acid polypeptide reads, in one-letter code: NADH-quinone oxidoreductase subunit H (340 aa).

A run of 9 helical transmembrane segments spans residues 9–29, 81–101, 113–133, 158–178, 184–204, 221–240, 245–264, 273–293, and 316–336; these read IWIIIKIVLILVPLLVAVAFI, LIAPILSLVPALAAWAVIPFA, LLFLFAMTSLGVYGILVAGWA, GFALVGVLLAAGTMNLQGIVL, LWHWFWLPLLPLFVTYWITAV, IVAGFHVEYAGVTFALFFLA, MVLVSAIATVIFLGGWLSPF, LFAWVPGIVWFVLKLSLFIFT, and VLIPVTLVWIIILALAIEFHW.

This sequence belongs to the complex I subunit 1 family. As to quaternary structure, NDH-1 is composed of 14 different subunits. Subunits NuoA, H, J, K, L, M, N constitute the membrane sector of the complex.

It is found in the cell inner membrane. The catalysed reaction is a quinone + NADH + 5 H(+)(in) = a quinol + NAD(+) + 4 H(+)(out). Functionally, NDH-1 shuttles electrons from NADH, via FMN and iron-sulfur (Fe-S) centers, to quinones in the respiratory chain. The immediate electron acceptor for the enzyme in this species is believed to be ubiquinone. Couples the redox reaction to proton translocation (for every two electrons transferred, four hydrogen ions are translocated across the cytoplasmic membrane), and thus conserves the redox energy in a proton gradient. This subunit may bind ubiquinone. The sequence is that of NADH-quinone oxidoreductase subunit H from Coxiella burnetii (strain CbuK_Q154) (Coxiella burnetii (strain Q154)).